Here is a 702-residue protein sequence, read N- to C-terminus: Elongation factor G (702 aa).

Positions 8–290 (ERYRNIGISA…AVIDYLPSPV (283 aa)) constitute a tr-type G domain. Residues 17 to 24 (AHIDAGKT), 88 to 92 (DTPGH), and 142 to 145 (NKMD) each bind GTP.

The protein belongs to the TRAFAC class translation factor GTPase superfamily. Classic translation factor GTPase family. EF-G/EF-2 subfamily.

The protein localises to the cytoplasm. In terms of biological role, catalyzes the GTP-dependent ribosomal translocation step during translation elongation. During this step, the ribosome changes from the pre-translocational (PRE) to the post-translocational (POST) state as the newly formed A-site-bound peptidyl-tRNA and P-site-bound deacylated tRNA move to the P and E sites, respectively. Catalyzes the coordinated movement of the two tRNA molecules, the mRNA and conformational changes in the ribosome. In Acidovorax ebreus (strain TPSY) (Diaphorobacter sp. (strain TPSY)), this protein is Elongation factor G.